Here is a 136-residue protein sequence, read N- to C-terminus: Large ribosomal subunit protein uL16c (136 aa).

Residues 1–20 form a disordered region; the sequence is MLSPKRTRFRKQHRGRMKGK.

The protein belongs to the universal ribosomal protein uL16 family. Part of the 50S ribosomal subunit.

The protein localises to the plastid. It is found in the chloroplast. This is Large ribosomal subunit protein uL16c from Triticum aestivum (Wheat).